The sequence spans 414 residues: Serine hydroxymethyltransferase (414 aa).

Residues Leu121 and 125 to 127 (GHL) each bind (6S)-5,6,7,8-tetrahydrofolate. Lys229 carries the N6-(pyridoxal phosphate)lysine modification.

Belongs to the SHMT family. As to quaternary structure, homodimer. It depends on pyridoxal 5'-phosphate as a cofactor.

The protein resides in the cytoplasm. The enzyme catalyses (6R)-5,10-methylene-5,6,7,8-tetrahydrofolate + glycine + H2O = (6S)-5,6,7,8-tetrahydrofolate + L-serine. It functions in the pathway one-carbon metabolism; tetrahydrofolate interconversion. Its pathway is amino-acid biosynthesis; glycine biosynthesis; glycine from L-serine: step 1/1. Catalyzes the reversible interconversion of serine and glycine with tetrahydrofolate (THF) serving as the one-carbon carrier. This reaction serves as the major source of one-carbon groups required for the biosynthesis of purines, thymidylate, methionine, and other important biomolecules. Also exhibits THF-independent aldolase activity toward beta-hydroxyamino acids, producing glycine and aldehydes, via a retro-aldol mechanism. In Thiobacillus denitrificans (strain ATCC 25259 / T1), this protein is Serine hydroxymethyltransferase.